Here is a 260-residue protein sequence, read N- to C-terminus: Cytochrome c oxidase subunit 2 (260 aa).

Topologically, residues 1–41 (MIVLKWLFFTISPCDAAEPWQLGFQDAATPIMQGIIDLHHD) are mitochondrial intermembrane. Residues 42–62 (IFFFLILILVFVLWILVRALW) form a helical membrane-spanning segment. At 63-86 (HFHYKKNAIPQRIVHGTTIEILWT) the chain is on the mitochondrial matrix side. The helical transmembrane segment at 87 to 107 (IFPSIILMFIAIPSFALLYSM) threads the bilayer. Over 108 to 260 (DEVVVDPAIT…NQLIPQTGEA (153 aa)) the chain is Mitochondrial intermembrane. Cu cation-binding residues include His187, Cys222, Glu224, Cys226, His230, and Met233. Glu224 lines the Mg(2+) pocket.

It belongs to the cytochrome c oxidase subunit 2 family. As to quaternary structure, component of the cytochrome c oxidase (complex IV, CIV), a multisubunit enzyme composed of a catalytic core of 3 subunits and several supernumerary subunits. The complex exists as a monomer or a dimer and forms supercomplexes (SCs) in the inner mitochondrial membrane with ubiquinol-cytochrome c oxidoreductase (cytochrome b-c1 complex, complex III, CIII). Cu cation serves as cofactor.

It localises to the mitochondrion inner membrane. The enzyme catalyses 4 Fe(II)-[cytochrome c] + O2 + 8 H(+)(in) = 4 Fe(III)-[cytochrome c] + 2 H2O + 4 H(+)(out). Component of the cytochrome c oxidase, the last enzyme in the mitochondrial electron transport chain which drives oxidative phosphorylation. The respiratory chain contains 3 multisubunit complexes succinate dehydrogenase (complex II, CII), ubiquinol-cytochrome c oxidoreductase (cytochrome b-c1 complex, complex III, CIII) and cytochrome c oxidase (complex IV, CIV), that cooperate to transfer electrons derived from NADH and succinate to molecular oxygen, creating an electrochemical gradient over the inner membrane that drives transmembrane transport and the ATP synthase. Cytochrome c oxidase is the component of the respiratory chain that catalyzes the reduction of oxygen to water. Electrons originating from reduced cytochrome c in the intermembrane space (IMS) are transferred via the dinuclear copper A center (CU(A)) of subunit 2 and heme A of subunit 1 to the active site in subunit 1, a binuclear center (BNC) formed by heme A3 and copper B (CU(B)). The BNC reduces molecular oxygen to 2 water molecules using 4 electrons from cytochrome c in the IMS and 4 protons from the mitochondrial matrix. The chain is Cytochrome c oxidase subunit 2 (COX2) from Arabidopsis thaliana (Mouse-ear cress).